A 474-amino-acid chain; its full sequence is Bifunctional ribulose 5-phosphate reductase/CDP-ribitol pyrophosphorylase Bcs1 (474 aa).

Residues 1–238 are ribitol-5-phosphate cytidylyltransferase; that stretch reads MNKNKNIGII…DKLFQSRSHF (238 aa). The tract at residues 250–474 is ribulose-5-phosphate reductase; sequence YDMKDQVLVV…ITNILADLYK (225 aa).

The protein in the N-terminal section; belongs to the IspD/TarI cytidylyltransferase family. In the C-terminal section; belongs to the short-chain dehydrogenases/reductases (SDR) family. As to quaternary structure, monomer.

It carries out the reaction D-ribitol 5-phosphate + CTP + H(+) = CDP-L-ribitol + diphosphate. The catalysed reaction is D-ribitol 5-phosphate + NADP(+) = D-ribulose 5-phosphate + NADPH + H(+). It participates in capsule biogenesis; capsule polysaccharide biosynthesis. In terms of biological role, catalyzes the NADPH-dependent reduction of D-ribulose 5-phosphate to D-ribitol 5-phosphate and the further reaction of D-ribitol 5-phosphate with CTP to form CDP-ribitol. This chain is Bifunctional ribulose 5-phosphate reductase/CDP-ribitol pyrophosphorylase Bcs1, found in Haemophilus influenzae.